A 668-amino-acid chain; its full sequence is DNA ligase (668 aa).

Residues 34–38 (DAEYD), 83–84 (SL), and Glu-113 contribute to the NAD(+) site. The N6-AMP-lysine intermediate role is filled by Lys-115. Residues Arg-136, Glu-170, Lys-286, and Lys-310 each coordinate NAD(+). Zn(2+) contacts are provided by Cys-404, Cys-407, Cys-422, and Cys-427. Residues 590 to 668 (DSDSYFAGKT…EEQLMGELKK (79 aa)) enclose the BRCT domain.

It belongs to the NAD-dependent DNA ligase family. LigA subfamily. Requires Mg(2+) as cofactor. It depends on Mn(2+) as a cofactor.

The catalysed reaction is NAD(+) + (deoxyribonucleotide)n-3'-hydroxyl + 5'-phospho-(deoxyribonucleotide)m = (deoxyribonucleotide)n+m + AMP + beta-nicotinamide D-nucleotide.. Its function is as follows. DNA ligase that catalyzes the formation of phosphodiester linkages between 5'-phosphoryl and 3'-hydroxyl groups in double-stranded DNA using NAD as a coenzyme and as the energy source for the reaction. It is essential for DNA replication and repair of damaged DNA. The protein is DNA ligase of Bacillus subtilis (strain 168).